The sequence spans 370 residues: MDHQSVVYNVYINQLNLYDCDYQKINMIEKFGPTIIVDQHVIVDTMSSIKTDSYKIDALKILLPMFMNPSLDVLLCVIDVISSDSYKIDAIKTLLQYCLEKPVDINIIEKYICCLGGDSYRLDAIIKLHTRLSTMDYSTVEQIIVLVRSDSYRLDVLKKISHKFEKQDAIKTINLIRSDSYKLDYILFVVDTKFLSLDESISLIDLLESNSYKSTYAEKIINTNSTITFNQIVQLTKDLPDTYRLGIADSFIKQLETFDTDNTDIFCQNLGKLTNYASYNQTVERLKIDKTISDKYKPCELTNTMSTSIFNLPVNSHNPLSINFIGNISPNAGTMVYKSIQENNGITTVTIKYSNGSSNIIMIDNNEKKN.

This is an uncharacterized protein from Acanthamoeba polyphaga (Amoeba).